Reading from the N-terminus, the 582-residue chain is Formate--tetrahydrofolate ligase (582 aa).

65–72 is a binding site for ATP; that stretch reads TPLGEGKT.

This sequence belongs to the formate--tetrahydrofolate ligase family.

It carries out the reaction (6S)-5,6,7,8-tetrahydrofolate + formate + ATP = (6R)-10-formyltetrahydrofolate + ADP + phosphate. It participates in one-carbon metabolism; tetrahydrofolate interconversion. The sequence is that of Formate--tetrahydrofolate ligase from Vibrio atlanticus (strain LGP32) (Vibrio splendidus (strain Mel32)).